The chain runs to 121 residues: UPF0102 protein BVU_1879 (121 aa).

This sequence belongs to the UPF0102 family.

This Phocaeicola vulgatus (strain ATCC 8482 / DSM 1447 / JCM 5826 / CCUG 4940 / NBRC 14291 / NCTC 11154) (Bacteroides vulgatus) protein is UPF0102 protein BVU_1879.